The sequence spans 86 residues: Cell division topological specificity factor (86 aa).

The protein belongs to the MinE family.

Prevents the cell division inhibition by proteins MinC and MinD at internal division sites while permitting inhibition at polar sites. This ensures cell division at the proper site by restricting the formation of a division septum at the midpoint of the long axis of the cell. The chain is Cell division topological specificity factor from Shewanella frigidimarina (strain NCIMB 400).